A 332-amino-acid polypeptide reads, in one-letter code: Endonuclease 8-like 2 (332 aa).

P2 serves as the catalytic Schiff-base intermediate with DNA. Residue E3 is the Proton donor of the active site. K50 serves as the catalytic Proton donor; for beta-elimination activity. K50 carries the N6-acetyllysine modification. The segment at 56-121 (FDPDEEMGPP…EDDSEYLERD (66 aa)) is disordered. S68 carries the phosphoserine modification. Positions 74-84 (PQKEAQKEGAA) are enriched in basic and acidic residues. Positions 94-105 (GQKTPDGSSQSA) are enriched in polar residues. The residue at position 154 (K154) is an N6-acetyllysine. A DNA-binding site is contributed by N231. The segment at 284–320 (QVYQREQCPAGHQVMKEAFGPQDGLQRLTWWCPQCQP) adopts an FPG-type zinc-finger fold. R310 acts as the Proton donor; for delta-elimination activity in catalysis.

It belongs to the FPG family. As to quaternary structure, binds EP300.

It is found in the nucleus. The catalysed reaction is 2'-deoxyribonucleotide-(2'-deoxyribose 5'-phosphate)-2'-deoxyribonucleotide-DNA = a 3'-end 2'-deoxyribonucleotide-(2,3-dehydro-2,3-deoxyribose 5'-phosphate)-DNA + a 5'-end 5'-phospho-2'-deoxyribonucleoside-DNA + H(+). Acetylation of Lys-50 leads to loss of DNA nicking activity. Its function is as follows. Involved in base excision repair of DNA damaged by oxidation or by mutagenic agents. Has DNA glycosylase activity towards 5-hydroxyuracil and other oxidized derivatives of cytosine with a preference for mismatched double-stranded DNA (DNA bubbles). Has low or no DNA glycosylase activity towards thymine glycol, 2-hydroxyadenine, hypoxanthine and 8-oxoguanine. Has AP (apurinic/apyrimidinic) lyase activity and introduces nicks in the DNA strand. Cleaves the DNA backbone by beta-delta elimination to generate a single-strand break at the site of the removed base with both 3'- and 5'-phosphates. In Pongo abelii (Sumatran orangutan), this protein is Endonuclease 8-like 2 (NEIL2).